A 256-amino-acid chain; its full sequence is Ubiquinone/menaquinone biosynthesis C-methyltransferase UbiE (256 aa).

A compositionally biased stretch (basic and acidic residues) spans 1–12 (MNDQRKGDHAEP). A disordered region spans residues 1 to 23 (MNDQRKGDHAEPTTHFGYQDVPE). Residues Thr-79, Asp-100, and 128–129 (DA) each bind S-adenosyl-L-methionine.

Belongs to the class I-like SAM-binding methyltransferase superfamily. MenG/UbiE family.

The enzyme catalyses a 2-demethylmenaquinol + S-adenosyl-L-methionine = a menaquinol + S-adenosyl-L-homocysteine + H(+). It carries out the reaction a 2-methoxy-6-(all-trans-polyprenyl)benzene-1,4-diol + S-adenosyl-L-methionine = a 5-methoxy-2-methyl-3-(all-trans-polyprenyl)benzene-1,4-diol + S-adenosyl-L-homocysteine + H(+). Its pathway is quinol/quinone metabolism; menaquinone biosynthesis; menaquinol from 1,4-dihydroxy-2-naphthoate: step 2/2. It functions in the pathway cofactor biosynthesis; ubiquinone biosynthesis. In terms of biological role, methyltransferase required for the conversion of demethylmenaquinol (DMKH2) to menaquinol (MKH2) and the conversion of 2-polyprenyl-6-methoxy-1,4-benzoquinol (DDMQH2) to 2-polyprenyl-3-methyl-6-methoxy-1,4-benzoquinol (DMQH2). The protein is Ubiquinone/menaquinone biosynthesis C-methyltransferase UbiE of Pseudomonas putida (strain GB-1).